A 411-amino-acid chain; its full sequence is Snake venom metalloproteinase ACLF (411 aa).

Residues 1–20 (MIQVLLVTLCLAAFPYQGSS) form the signal peptide. The propeptide occupies 21–189 (IILESGNVND…KKAFQLNLTP (169 aa)). The region spanning 197–393 (RYVELVIVAD…NNPQCILNKP (197 aa)) is the Peptidase M12B domain. Positions 200 and 284 each coordinate Ca(2+). Cystine bridges form between cysteine 308-cysteine 388, cysteine 348-cysteine 372, and cysteine 350-cysteine 355. Histidine 333 serves as a coordination point for Zn(2+). Residue glutamate 334 is part of the active site. Residues histidine 337 and histidine 343 each contribute to the Zn(2+) site. Positions 388, 391, 403, 406, 408, and 410 each coordinate Ca(2+).

The protein belongs to the venom metalloproteinase (M12B) family. P-I subfamily. In terms of assembly, monomer. Zn(2+) is required as a cofactor. Expressed by the venom gland.

It localises to the secreted. Its activity is regulated as follows. Inhibited by EDTA and 1,10-phenanthroline, but not by PMSF. In terms of biological role, snake venom zinc metalloprotease that has fibrinolytic activity. The recombinant enzyme cleaves both alpha- and beta-chains of fibrinogen, but not the gamma-chain. The recombinant protein does not produce hemorrhage in mice. Cleaves the peptide substrate Abz-LVEALYQ-EDDnp at the Ala-Leu bond in vitro. The sequence is that of Snake venom metalloproteinase ACLF (ACLPREF) from Agkistrodon contortrix laticinctus (Broad-banded copperhead).